The following is a 692-amino-acid chain: Vitamin B12-dependent ribonucleoside-diphosphate reductase (692 aa).

Positions 7–95 (AKVRRRDGTL…IYRQRRAELR (89 aa)) constitute an ATP-cone domain. Substrate-binding positions include Ser-177, 192 to 193 (GC), Gly-221, 375 to 379 (NPCGE), and 520 to 524 (PTGTI). Cys-193 and Cys-388 are disulfide-bonded. Asn-375 acts as the Proton acceptor in catalysis. The active-site Cysteine radical intermediate is Cys-377. Catalysis depends on Glu-379, which acts as the Proton acceptor.

Belongs to the ribonucleoside diphosphate reductase class-2 family. The cofactor is adenosylcob(III)alamin.

It catalyses the reaction a 2'-deoxyribonucleoside 5'-diphosphate + [thioredoxin]-disulfide + H2O = a ribonucleoside 5'-diphosphate + [thioredoxin]-dithiol. In terms of biological role, provides the precursors necessary for DNA synthesis. Catalyzes the biosynthesis of deoxyribonucleotides from the corresponding ribonucleotides. The sequence is that of Vitamin B12-dependent ribonucleoside-diphosphate reductase (nrdZ) from Mycobacterium tuberculosis (strain CDC 1551 / Oshkosh).